We begin with the raw amino-acid sequence, 319 residues long: MRSCFCVRRSRDPPPPQPPPPPPQRGTDQSTMPEVKDLSEALPETSMDPITGVGVVASRNRAPTGYDVVAQTADGVDADLWKDGLFKSKVTRYLCFTRSFSKENSHLGNVLVDMKLIDIKDTLPVGFIPIQETVDTQEVAFRKKRLCIKFIPRDSTEAAICDIRIMGRTKQAPPQYTFIGELNSMGIWYRMGRVPRNHDSSQPTTPSQSSAASTPAPNLPRHISLTLPATFRGRNSTRTDYEYQHSNLYAISAMDGVPFMISEKFSCVPESMQPFDLLGITIKSLAEIEKEYEYSFRTEQSAAARLPPSPTRCQQIPQS.

Positions 1-50 are disordered; sequence MRSCFCVRRSRDPPPPQPPPPPPQRGTDQSTMPEVKDLSEALPETSMDPI. Residues 13–24 are compositionally biased toward pro residues; the sequence is PPPPQPPPPPPQ. 2 positions are modified to phosphoserine: serine 46 and serine 101. One can recognise an MABP domain in the interval 47 to 193; that stretch reads MDPITGVGVV…SMGIWYRMGR (147 aa). Threonine 122, threonine 204, and threonine 205 each carry phosphothreonine. A disordered region spans residues 195–222; sequence PRNHDSSQPTTPSQSSAASTPAPNLPRH. Over residues 200–216 the composition is skewed to low complexity; that stretch reads SSQPTTPSQSSAASTPA. The residue at position 224 (serine 224) is a Phosphoserine. Residues 254–303 enclose the UMA domain; sequence MDGVPFMISEKFSCVPESMQPFDLLGITIKSLAEIEKEYEYSFRTEQSAA. Positions 299 to 319 are disordered; sequence EQSAAARLPPSPTRCQQIPQS. Serine 309 is modified (phosphoserine).

The protein belongs to the MVB12 family. As to quaternary structure, component of the ESCRT-I complex (endosomal sorting complex required for transport I) which consists of TSG101, VPS28, a VPS37 protein (VPS37A to -D) and MVB12A or MVB12B in a 1:1:1:1 stoichiometry. Interacts with TSG101; the association appears to be mediated by the TSG101-VPS37 binary subcomplex. Interacts with VPS28. Interacts with VPS37B; the association appears to be mediated by the TSG101-VPS37 binary subcomplex. Interacts with VPS37C; the association appears to be mediated by the TSG101-VPS37 binary subcomplex.

It is found in the endosome. The protein localises to the late endosome membrane. In terms of biological role, component of the ESCRT-I complex, a regulator of vesicular trafficking process. Required for the sorting of endocytic ubiquitinated cargos into multivesicular bodies. The polypeptide is Multivesicular body subunit 12B (MVB12B) (Homo sapiens (Human)).